The primary structure comprises 290 residues: Poly-beta-1,6-N-acetyl-D-glucosamine N-deacetylase (290 aa).

A signal peptide spans 1–28; that stretch reads MKYRKFIILVLSILIILPVSTLDGHHIA. Residues 114-290 enclose the NodB homology domain; it reads RSVWINFDDM…KRWDGFHEKD (177 aa).

This sequence belongs to the polysaccharide deacetylase family.

Its subcellular location is the secreted. It is found in the cell wall. In terms of biological role, catalyzes the N-deacetylation of poly-beta-1,6-N-acetyl-D-glucosamine (PNAG, also referred to as PIA), a biofilm adhesin polysaccharide. N-deacetylation is crucial for attachment of the polysaccharide to the bacterial cell surface; it leads to the introduction of positive charges in the otherwise neutral PIA polymer, allowing electrostatic interactions. This is Poly-beta-1,6-N-acetyl-D-glucosamine N-deacetylase (icaB) from Staphylococcus aureus (strain NCTC 8325 / PS 47).